The sequence spans 892 residues: Translation initiation factor IF-2 (892 aa).

Residues 165–175 (EEQAELERQKT) are compositionally biased toward basic and acidic residues. Disordered stretches follow at residues 165–250 (EEQA…EDDS) and 264–300 (ERAR…AHGF). The span at 208–222 (PRAVRPAPAARPSVS) shows a compositional bias: low complexity. The 170-residue stretch at 391–560 (PRPPVVTIMG…SIQAEVLELK (170 aa)) folds into the tr-type G domain. Residues 400-407 (GHVDHGKT), 446-450 (DTPGH), and 500-503 (SKID) contribute to the GTP site.

The protein belongs to the TRAFAC class translation factor GTPase superfamily. Classic translation factor GTPase family. IF-2 subfamily.

It is found in the cytoplasm. Functionally, one of the essential components for the initiation of protein synthesis. Protects formylmethionyl-tRNA from spontaneous hydrolysis and promotes its binding to the 30S ribosomal subunits. Also involved in the hydrolysis of GTP during the formation of the 70S ribosomal complex. In Xylella fastidiosa (strain 9a5c), this protein is Translation initiation factor IF-2.